A 221-amino-acid chain; its full sequence is Phosphatidylserine decarboxylase proenzyme (221 aa).

Ser189 functions as the Schiff-base intermediate with substrate; via pyruvic acid in the catalytic mechanism. Ser189 bears the Pyruvic acid (Ser); by autocatalysis mark.

This sequence belongs to the phosphatidylserine decarboxylase family. PSD-A subfamily. In terms of assembly, heterodimer of a large membrane-associated beta subunit and a small pyruvoyl-containing alpha subunit. Pyruvate is required as a cofactor. Is synthesized initially as an inactive proenzyme. Formation of the active enzyme involves a self-maturation process in which the active site pyruvoyl group is generated from an internal serine residue via an autocatalytic post-translational modification. Two non-identical subunits are generated from the proenzyme in this reaction, and the pyruvate is formed at the N-terminus of the alpha chain, which is derived from the carboxyl end of the proenzyme. The post-translation cleavage follows an unusual pathway, termed non-hydrolytic serinolysis, in which the side chain hydroxyl group of the serine supplies its oxygen atom to form the C-terminus of the beta chain, while the remainder of the serine residue undergoes an oxidative deamination to produce ammonia and the pyruvoyl prosthetic group on the alpha chain.

The protein localises to the cell membrane. The catalysed reaction is a 1,2-diacyl-sn-glycero-3-phospho-L-serine + H(+) = a 1,2-diacyl-sn-glycero-3-phosphoethanolamine + CO2. The protein operates within phospholipid metabolism; phosphatidylethanolamine biosynthesis; phosphatidylethanolamine from CDP-diacylglycerol: step 2/2. Its function is as follows. Catalyzes the formation of phosphatidylethanolamine (PtdEtn) from phosphatidylserine (PtdSer). In Porphyromonas gingivalis (strain ATCC 33277 / DSM 20709 / CIP 103683 / JCM 12257 / NCTC 11834 / 2561), this protein is Phosphatidylserine decarboxylase proenzyme.